Reading from the N-terminus, the 375-residue chain is UPF0612 protein C569.003 (375 aa).

This sequence belongs to the UPF0612 family.

It is found in the cytoplasm. The chain is UPF0612 protein C569.003 from Schizosaccharomyces pombe (strain 972 / ATCC 24843) (Fission yeast).